Here is a 124-residue protein sequence, read N- to C-terminus: Fluoride-specific ion channel FluC (124 aa).

The next 4 helical transmembrane spans lie at Met1 to Leu21, Val35 to Leu55, Leu68 to Phe88, and Phe99 to Ile119. The Na(+) site is built by Gly75 and Thr78.

The protein belongs to the fluoride channel Fluc/FEX (TC 1.A.43) family.

The protein resides in the cell inner membrane. The catalysed reaction is fluoride(in) = fluoride(out). With respect to regulation, na(+) is not transported, but it plays an essential structural role and its presence is essential for fluoride channel function. Its function is as follows. Fluoride-specific ion channel. Important for reducing fluoride concentration in the cell, thus reducing its toxicity. The protein is Fluoride-specific ion channel FluC of Aquifex aeolicus (strain VF5).